A 253-amino-acid polypeptide reads, in one-letter code: Low affinity immunoglobulin gamma Fc region receptor III-A (253 aa).

Positions 1-20 are cleaved as a signal peptide; it reads MGQPLPPVALLLLVSASSRA. The Extracellular segment spans residues 21–207; that stretch reads ADVPKALVLL…ISSSVLPWHQ (187 aa). Ig-like C2-type domains are found at residues 24–90 and 99–189; these read PKAL…YRCQ and PVQL…VTIT. 2 disulfides stabilise this stretch: Cys47–Cys89 and Cys128–Cys172. 4 N-linked (GlcNAc...) asparagine glycosylation sites follow: Asn56, Asn63, Asn165, and Asn180. The chain crosses the membrane as a helical span at residues 208-226; it reads IAFCLVMGLLLAADTGLYF. Over 227 to 253 the chain is Cytoplasmic; the sequence is SVQRDLRSSQRARKEHTLGWSLGSQDK.

In terms of assembly, forms a heterooligomeric complex with ITAM-containing signaling subunits FCER1G. Interacts (via transmembrane domain) with signaling subunits; this interaction is a prerequisite for receptor complex expression on the cell surface and intracellular signal transduction. Binds the Fc region of antigen-complexed IgG.

The protein localises to the cell membrane. Receptor for the invariable Fc fragment of immunoglobulin gamma (IgG). Optimally activated upon binding of clustered antigen-IgG complexes displayed on cell surfaces, triggers lysis of antibody-coated cells, a process known as antibody-dependent cellular cytotoxicity (ADCC). Does not bind free monomeric IgG, thus avoiding inappropriate effector cell activation in the absence of antigenic trigger. Mediates IgG effector functions on natural killer (NK) cells. Binds antigen-IgG complexes generated upon infection and triggers NK cell-dependent cytokine production and degranulation to limit viral load and propagation. Fc-binding subunit that associates with FCER1G adapter to form functional signaling complexes. Following the engagement of antigen-IgG complexes, triggers phosphorylation of immunoreceptor tyrosine-based activation motif (ITAM)-containing adapters with subsequent activation of phosphatidylinositol 3-kinase signaling and sustained elevation of intracellular calcium that ultimately drive NK cell activation. Mediates enhanced ADCC in response to afucosylated IgGs. The protein is Low affinity immunoglobulin gamma Fc region receptor III-A of Oryctolagus cuniculus (Rabbit).